We begin with the raw amino-acid sequence, 572 residues long: Hemagglutinin-neuraminidase (572 aa).

At 1-31 (MEYWKHTNHRKDAGNELETSMATHGNKLTNK) the chain is on the intravirion side. A helical transmembrane segment spans residues 32–52 (ITYILWTIILVLLSIVLIIVL). Over 53–572 (INSIKSEKAH…FKTEVPKSCS (520 aa)) the chain is Virion surface. 2 disulfides stabilise this stretch: cysteine 190–cysteine 214 and cysteine 256–cysteine 269. The interval 252 to 257 (NRKSCS) is involved in neuraminidase activity. N-linked (GlcNAc...) asparagine; by host glycosylation is found at asparagine 308 and asparagine 351. Disulfide bonds link cysteine 355/cysteine 469 and cysteine 463/cysteine 473. Residue asparagine 523 is glycosylated (N-linked (GlcNAc...) asparagine; by host). Cysteine 535 and cysteine 544 are disulfide-bonded.

It belongs to the paramyxoviruses hemagglutinin-neuraminidase family. In terms of assembly, homotetramer; composed of disulfide-linked homodimers. Interacts with F protein trimer.

The protein resides in the virion membrane. Its subcellular location is the host cell membrane. The enzyme catalyses Hydrolysis of alpha-(2-&gt;3)-, alpha-(2-&gt;6)-, alpha-(2-&gt;8)- glycosidic linkages of terminal sialic acid residues in oligosaccharides, glycoproteins, glycolipids, colominic acid and synthetic substrates.. Functionally, attaches the virus to sialic acid-containing cell receptors and thereby initiating infection. Binding of HN protein to the receptor induces a conformational change that allows the F protein to trigger virion/cell membranes fusion. In terms of biological role, neuraminidase activity ensures the efficient spread of the virus by dissociating the mature virions from the neuraminic acid containing glycoproteins. The protein is Hemagglutinin-neuraminidase (HN) of Human parainfluenza 3 virus (strain Tex/9305/82) (HPIV-3).